The following is a 488-amino-acid chain: Phenylalanine--tRNA ligase alpha subunit (488 aa).

L-phenylalanine contacts are provided by residues threonine 315, glutamine 354–aspartate 356, phenylalanine 394, and phenylalanine 419.

It belongs to the class-II aminoacyl-tRNA synthetase family. Phe-tRNA synthetase alpha subunit type 2 subfamily. In terms of assembly, tetramer of two alpha and two beta subunits. It depends on Mg(2+) as a cofactor.

The protein resides in the cytoplasm. It carries out the reaction tRNA(Phe) + L-phenylalanine + ATP = L-phenylalanyl-tRNA(Phe) + AMP + diphosphate + H(+). The protein is Phenylalanine--tRNA ligase alpha subunit of Pyrobaculum calidifontis (strain DSM 21063 / JCM 11548 / VA1).